An 84-amino-acid polypeptide reads, in one-letter code: U8-theraphotoxin-Hhn1g (84 aa).

A signal peptide spans 1–21 (MKVVLLVCLVWMMAMMELVSC). 5 disulfide bridges follow: Cys23/Cys35, Cys29/Cys44, Cys34/Cys67, Cys54/Cys75, and Cys69/Cys81.

Belongs to the AVIT (prokineticin) family. Expressed by the venom gland.

The protein localises to the secreted. The polypeptide is U8-theraphotoxin-Hhn1g (Cyriopagopus hainanus (Chinese bird spider)).